The sequence spans 308 residues: MSHSNNFYRLETRLQSQTGKAIGDFGMIEDGDTVLVCMSGGKDSYTMLSVLMALQKRAPIKFKLIAMNLDQKQPGFPEHILPEYLKSVGVEYVIVEADTYSIVKEKVPEGKTTCSLCSRLRRGVIYRTAKELGANKIALGHHRDDIVNTFFLNMFFGGKMKAMPPKLATDDGAHIVIRPLAYCSEKDIASYARAMEFPIIPCNLCGSQENLQRKKVSEMLQEWERQNPGRIDNIFSALRNVVPSHLADTELFPFTGLATGLAKVDEASLFGETTFQQQPLTFAGSLDENRMEFVRFERAPAAEPAGTP.

The short motif at 39–44 is the PP-loop motif element; that stretch reads SGGKDS. Residues C114, C117, and C205 each coordinate [4Fe-4S] cluster.

Belongs to the TtcA family. As to quaternary structure, homodimer. Mg(2+) is required as a cofactor. Requires [4Fe-4S] cluster as cofactor.

Its subcellular location is the cytoplasm. The catalysed reaction is cytidine(32) in tRNA + S-sulfanyl-L-cysteinyl-[cysteine desulfurase] + AH2 + ATP = 2-thiocytidine(32) in tRNA + L-cysteinyl-[cysteine desulfurase] + A + AMP + diphosphate + H(+). The protein operates within tRNA modification. Functionally, catalyzes the ATP-dependent 2-thiolation of cytidine in position 32 of tRNA, to form 2-thiocytidine (s(2)C32). The sulfur atoms are provided by the cysteine/cysteine desulfurase (IscS) system. In Cupriavidus taiwanensis (strain DSM 17343 / BCRC 17206 / CCUG 44338 / CIP 107171 / LMG 19424 / R1) (Ralstonia taiwanensis (strain LMG 19424)), this protein is tRNA-cytidine(32) 2-sulfurtransferase.